A 63-amino-acid chain; its full sequence is Keratin-associated protein 8-1 (63 aa).

Positions proline 12–tyrosine 54 are 12 X 2 AA repeats of G-[YCGS].

It belongs to the KRTAP type 8 family. In terms of assembly, interacts with hair keratins. Is essentially restricted to only one vertical half of the hair forming compartment and in beard hairs is absent from the central medulla.

Its function is as follows. In the hair cortex, hair keratin intermediate filaments are embedded in an interfilamentous matrix, consisting of hair keratin-associated proteins (KRTAP), which are essential for the formation of a rigid and resistant hair shaft through their extensive disulfide bond cross-linking with abundant cysteine residues of hair keratins. The matrix proteins include the high-sulfur and high-glycine-tyrosine keratins. The protein is Keratin-associated protein 8-1 (KRTAP8-1) of Homo sapiens (Human).